A 121-amino-acid polypeptide reads, in one-letter code: Small ribosomal subunit protein uS13 (121 aa).

The tract at residues 96-121 (PVRGQNTKNNARTRKGKAVAIAGKKK) is disordered. Basic residues predominate over residues 106–121 (ARTRKGKAVAIAGKKK).

This sequence belongs to the universal ribosomal protein uS13 family. Part of the 30S ribosomal subunit. Forms a loose heterodimer with protein S19. Forms two bridges to the 50S subunit in the 70S ribosome.

Functionally, located at the top of the head of the 30S subunit, it contacts several helices of the 16S rRNA. In the 70S ribosome it contacts the 23S rRNA (bridge B1a) and protein L5 of the 50S subunit (bridge B1b), connecting the 2 subunits; these bridges are implicated in subunit movement. Contacts the tRNAs in the A and P-sites. The sequence is that of Small ribosomal subunit protein uS13 from Streptococcus gordonii (strain Challis / ATCC 35105 / BCRC 15272 / CH1 / DL1 / V288).